The following is a 176-amino-acid chain: Transmembrane protein 238 (176 aa).

Residues 1–21 form a disordered region; sequence MAAASPVCGSQASAVGASSPP. Residues 1–36 lie on the Cytoplasmic side of the membrane; sequence MAAASPVCGSQASAVGASSPPAPAPAPAAGLGRCRM. Low complexity predominate over residues 9–19; the sequence is GSQASAVGASS. The helical transmembrane segment at 37-57 threads the bilayer; sequence ALLLAVALDVAGMAALLTGVF. The Extracellular portion of the chain corresponds to 58–69; it reads AQLQVRGRDFGD. Residues 70–90 form a helical membrane-spanning segment; it reads LLIYSGALLVFLSLLGWILWY. Residues 91–176 lie on the Cytoplasmic side of the membrane; sequence TGNIEISRQE…GSVAAGTGSE (86 aa). Residues 124–135 show a composition bias toward low complexity; it reads SAPATASPRTTA. Positions 124–156 are disordered; it reads SAPATASPRTTAGLRSARRANRAPQPSSSGSRR. Serine 175 is subject to Phosphoserine.

Its subcellular location is the membrane. This is Transmembrane protein 238 (Tmem238) from Mus musculus (Mouse).